A 189-amino-acid chain; its full sequence is MTVGILALQGDFREHEEMLRRIGAPTLQVRLPKHLDRVERLIIPGGESTTIGKLLAMYGLIEPLRARVREGMPIWGTCAGAILMAQRIADGRADQPSLRLMAVTARRNAFGSQLESFEIDLPVEALGGESLRMVFIRAPVLEDLGDDVTPLARLEDGRVVAARQANMLATCFHPELTSDERMHRYFLEM.

46-48 is a binding site for L-glutamine; it reads GES. The Nucleophile role is filled by Cys78. L-glutamine contacts are provided by residues Arg107 and 136–137; that span reads IR. Catalysis depends on charge relay system residues His173 and Glu175.

Belongs to the glutaminase PdxT/SNO family. As to quaternary structure, in the presence of PdxS, forms a dodecamer of heterodimers. Only shows activity in the heterodimer.

The catalysed reaction is aldehydo-D-ribose 5-phosphate + D-glyceraldehyde 3-phosphate + L-glutamine = pyridoxal 5'-phosphate + L-glutamate + phosphate + 3 H2O + H(+). It carries out the reaction L-glutamine + H2O = L-glutamate + NH4(+). The protein operates within cofactor biosynthesis; pyridoxal 5'-phosphate biosynthesis. Catalyzes the hydrolysis of glutamine to glutamate and ammonia as part of the biosynthesis of pyridoxal 5'-phosphate. The resulting ammonia molecule is channeled to the active site of PdxS. This Roseiflexus castenholzii (strain DSM 13941 / HLO8) protein is Pyridoxal 5'-phosphate synthase subunit PdxT.